A 658-amino-acid chain; its full sequence is Katanin p80 WD40 repeat-containing subunit B1 (658 aa).

An interaction with dynein region spans residues 1–284 (MATPVVTKTA…VADLAICNDQ (284 aa)). The segment at 1–300 (MATPVVTKTA…SQSNVSSYVV (300 aa)) is interaction with centrosomes. WD repeat units lie at residues 18–58 (AHAS…CIMS), 61–100 (GHTS…ILRT), 103–142 (GHKA…CVFR), 145–184 (GHSQ…MMSE), 187–226 (GHTG…VVSC), and 229–269 (GEPG…DVVL). Positions 285–437 (LIGVAFSQSN…LPQLPVPNLE (153 aa)) are interaction with PAFAH1B1. A compositionally biased stretch (polar residues) spans 311-329 (VTQDPVQANQPLTQQTPNP). Disordered stretches follow at residues 311–419 (VTQD…EVSK) and 434–458 (PNLE…PDII). Over residues 352–374 (HNSESERRSPSSEDDRDERESRA) the composition is skewed to basic and acidic residues. T395 bears the Phosphothreonine mark. An interaction with KATNA1 and NDEL1 region spans residues 436–658 (LEVPARPSVM…ELHLLMASLD (223 aa)).

It belongs to the WD repeat KATNB1 family. As to quaternary structure, interacts with KATNA1. This interaction enhances the microtubule binding and severing activity of KATNA1 and also targets this activity to the centrosome. This interaction is weakly competed by KATNBL1 which has a lower affinity for it. Interacts with ASPM; the katanin complex formation KATNA1:KATNB1 is required for the association of ASPM. Interacts with dynein, microtubules, NDEL1 and PAFAH1B1. Interacts with KATNAL1; this interaction is weakly competed by KATNBL1 which has a lower affinity for it. Interacts with CAMSAP2 and CAMSAP3; leading to regulate the length of CAMSAP-decorated microtubule stretches.

The protein resides in the cytoplasm. The protein localises to the cytoskeleton. It localises to the microtubule organizing center. It is found in the centrosome. Its subcellular location is the spindle pole. The protein resides in the spindle. Functionally, participates in a complex which severs microtubules in an ATP-dependent manner. May act to target the enzymatic subunit of this complex to sites of action such as the centrosome. Microtubule severing may promote rapid reorganization of cellular microtubule arrays and the release of microtubules from the centrosome following nucleation. Microtubule release from the mitotic spindle poles may allow depolymerization of the microtubule end proximal to the spindle pole, leading to poleward microtubule flux and poleward motion of chromosome. The function in regulating microtubule dynamics at spindle poles seems to depend on the association of the katanin KATNA1:KATNB1 complex with ASPM which recruits it to microtubules. Reversely KATNA1:KATNB1 can enhance ASPM blocking activity on microtubule minus-end growth. Microtubule release within the cell body of neurons may be required for their transport into neuronal processes by microtubule-dependent motor proteins. This transport is required for axonal growth. The protein is Katanin p80 WD40 repeat-containing subunit B1 (Katnb1) of Mus musculus (Mouse).